The primary structure comprises 417 residues: Imidazolonepropionase (417 aa).

2 residues coordinate Fe(3+): H80 and H82. Zn(2+) is bound by residues H80 and H82. 4-imidazolone-5-propanoate contacts are provided by R89, Y152, and H187. Y152 contacts N-formimidoyl-L-glutamate. H252 lines the Fe(3+) pocket. H252 serves as a coordination point for Zn(2+). E255 is a 4-imidazolone-5-propanoate binding site. D326 contacts Fe(3+). Residue D326 coordinates Zn(2+). Residues N328 and G330 each contribute to the N-formimidoyl-L-glutamate site. Residue S331 participates in 4-imidazolone-5-propanoate binding.

It belongs to the metallo-dependent hydrolases superfamily. HutI family. Zn(2+) is required as a cofactor. It depends on Fe(3+) as a cofactor.

It localises to the cytoplasm. The catalysed reaction is 4-imidazolone-5-propanoate + H2O = N-formimidoyl-L-glutamate. Its pathway is amino-acid degradation; L-histidine degradation into L-glutamate; N-formimidoyl-L-glutamate from L-histidine: step 3/3. Functionally, catalyzes the hydrolytic cleavage of the carbon-nitrogen bond in imidazolone-5-propanoate to yield N-formimidoyl-L-glutamate. It is the third step in the universal histidine degradation pathway. In Bacteroides fragilis (strain ATCC 25285 / DSM 2151 / CCUG 4856 / JCM 11019 / LMG 10263 / NCTC 9343 / Onslow / VPI 2553 / EN-2), this protein is Imidazolonepropionase.